Here is a 556-residue protein sequence, read N- to C-terminus: Arginine--tRNA ligase 1 (556 aa).

The 'HIGH' region motif lies at 132-142 (ANPTGNLHLGH).

This sequence belongs to the class-I aminoacyl-tRNA synthetase family. Monomer.

It localises to the cytoplasm. It carries out the reaction tRNA(Arg) + L-arginine + ATP = L-arginyl-tRNA(Arg) + AMP + diphosphate. This chain is Arginine--tRNA ligase 1 (argS1), found in Halalkalibacterium halodurans (strain ATCC BAA-125 / DSM 18197 / FERM 7344 / JCM 9153 / C-125) (Bacillus halodurans).